A 424-amino-acid chain; its full sequence is Phosphomethylpyrimidine synthase (424 aa).

Substrate-binding positions include Asn-66, Met-95, Tyr-124, His-163, 185–187 (SRG), 226–229 (DGMR), and Glu-265. His-269 contacts Zn(2+). Phe-292 is a substrate binding site. His-333 contacts Zn(2+). [4Fe-4S] cluster is bound by residues Cys-408, Cys-411, and Cys-415.

This sequence belongs to the ThiC family. Requires [4Fe-4S] cluster as cofactor.

It carries out the reaction 5-amino-1-(5-phospho-beta-D-ribosyl)imidazole + S-adenosyl-L-methionine = 4-amino-2-methyl-5-(phosphooxymethyl)pyrimidine + CO + 5'-deoxyadenosine + formate + L-methionine + 3 H(+). It participates in cofactor biosynthesis; thiamine diphosphate biosynthesis. In terms of biological role, catalyzes the synthesis of the hydroxymethylpyrimidine phosphate (HMP-P) moiety of thiamine from aminoimidazole ribotide (AIR) in a radical S-adenosyl-L-methionine (SAM)-dependent reaction. In Thermotoga sp. (strain RQ2), this protein is Phosphomethylpyrimidine synthase.